The following is a 145-amino-acid chain: Large ribosomal subunit protein uL13 (145 aa).

Belongs to the universal ribosomal protein uL13 family. Part of the 50S ribosomal subunit.

In terms of biological role, this protein is one of the early assembly proteins of the 50S ribosomal subunit, although it is not seen to bind rRNA by itself. It is important during the early stages of 50S assembly. This Bacillus pumilus (strain SAFR-032) protein is Large ribosomal subunit protein uL13.